The following is a 248-amino-acid chain: MGYNKSLRYSRHEGTTCVIDNHHLKSLGSVLNDVRRKKDRIREAEYEPILDIADQYMVTEDPFRGPGKNVRITLFKEIRRVHPDTMKLVCNWSGKEFLRETWTRFISEEFPITTDQEIMDLWFEIQLRPMHPNRCYKFTMQYALGAHPDYVAHDVIRQHDPYYVGPNNIERINLSKKGFAFPLTCLQSVYNDNFERFFDDVLWPYFHRPLVYIGTTSAEVEEIMIEVSLLFKIKEFAPDVPLFTGPAY.

Belongs to the polyhedrin family.

Component of the virus occlusion bodies, which are large proteinaceous structures, that protect the virus from the outside environment for extended periods until they are ingested by insect larvae. This is Granulin from Adoxophyes orana granulovirus (AoGV).